Consider the following 212-residue polypeptide: Phosphatidylserine decarboxylase proenzyme (212 aa).

Ser182 functions as the Schiff-base intermediate with substrate; via pyruvic acid in the catalytic mechanism. The residue at position 182 (Ser182) is a Pyruvic acid (Ser); by autocatalysis.

It belongs to the phosphatidylserine decarboxylase family. PSD-A subfamily. Heterodimer of a large membrane-associated beta subunit and a small pyruvoyl-containing alpha subunit. The cofactor is pyruvate. In terms of processing, is synthesized initially as an inactive proenzyme. Formation of the active enzyme involves a self-maturation process in which the active site pyruvoyl group is generated from an internal serine residue via an autocatalytic post-translational modification. Two non-identical subunits are generated from the proenzyme in this reaction, and the pyruvate is formed at the N-terminus of the alpha chain, which is derived from the carboxyl end of the proenzyme. The post-translation cleavage follows an unusual pathway, termed non-hydrolytic serinolysis, in which the side chain hydroxyl group of the serine supplies its oxygen atom to form the C-terminus of the beta chain, while the remainder of the serine residue undergoes an oxidative deamination to produce ammonia and the pyruvoyl prosthetic group on the alpha chain.

Its subcellular location is the cell membrane. It carries out the reaction a 1,2-diacyl-sn-glycero-3-phospho-L-serine + H(+) = a 1,2-diacyl-sn-glycero-3-phosphoethanolamine + CO2. Its pathway is phospholipid metabolism; phosphatidylethanolamine biosynthesis; phosphatidylethanolamine from CDP-diacylglycerol: step 2/2. Catalyzes the formation of phosphatidylethanolamine (PtdEtn) from phosphatidylserine (PtdSer). The polypeptide is Phosphatidylserine decarboxylase proenzyme (Paraburkholderia phytofirmans (strain DSM 17436 / LMG 22146 / PsJN) (Burkholderia phytofirmans)).